A 356-amino-acid chain; its full sequence is MQSITEKIDIKALTLEELKASLKIIGEKEFRAKQIYEWLHVKLVRDFEEMTNLSKELRAKLASEYELICVNDLERYESKMDGTVKYLFRLSDGNVVECVLMKYHHGNSVCISSQVGCRMGCRFCASTLGGLTRNLKTSEMLDEVYQIQRLSGERVSNIVIMGTGEPMDNYDNFVKFIRMISSSDGLNISQRNITVSTCGIVPKMRALAEEGFAITLALSLHAPNDEERAKIMPVANSYQLQDVLNACDYYYEKTGRRVSYEYSLVDGVNDTAACAKELSRLLKGKNCHVNLIPVNPIKERDYKRSTGNNIQNFKNILEKNRINVTIRREMGSDINAACGQLRKSYTDKTMVQEVNL.

The active-site Proton acceptor is the Glu-97. In terms of domain architecture, Radical SAM core spans 103–333 (YHHGNSVCIS…VTIRREMGSD (231 aa)). Cysteines 110 and 338 form a disulfide. [4Fe-4S] cluster-binding residues include Cys-117, Cys-121, and Cys-124. S-adenosyl-L-methionine-binding positions include 164–165 (GE), Ser-196, 219–221 (SLH), and Asn-295. Residue Cys-338 is the S-methylcysteine intermediate of the active site.

It belongs to the radical SAM superfamily. RlmN family. [4Fe-4S] cluster serves as cofactor.

The protein localises to the cytoplasm. It catalyses the reaction adenosine(2503) in 23S rRNA + 2 reduced [2Fe-2S]-[ferredoxin] + 2 S-adenosyl-L-methionine = 2-methyladenosine(2503) in 23S rRNA + 5'-deoxyadenosine + L-methionine + 2 oxidized [2Fe-2S]-[ferredoxin] + S-adenosyl-L-homocysteine. The enzyme catalyses adenosine(37) in tRNA + 2 reduced [2Fe-2S]-[ferredoxin] + 2 S-adenosyl-L-methionine = 2-methyladenosine(37) in tRNA + 5'-deoxyadenosine + L-methionine + 2 oxidized [2Fe-2S]-[ferredoxin] + S-adenosyl-L-homocysteine. Functionally, specifically methylates position 2 of adenine 2503 in 23S rRNA and position 2 of adenine 37 in tRNAs. The chain is Probable dual-specificity RNA methyltransferase RlmN from Lachnoclostridium phytofermentans (strain ATCC 700394 / DSM 18823 / ISDg) (Clostridium phytofermentans).